The primary structure comprises 147 residues: Hemoglobin subunit beta (147 aa).

Val-2 carries the post-translational modification N-acetylvaline. In terms of domain architecture, Globin spans 3–147 (HLTPDEKAAV…VANALAHKYH (145 aa)). Residue Thr-13 is modified to Phosphothreonine. Ser-45 is subject to Phosphoserine. Lys-60 is subject to N6-acetyllysine. His-64 is a heme b binding site. Lys-83 is modified (N6-acetyllysine). A heme b-binding site is contributed by His-93. S-nitrosocysteine is present on Cys-94. Lys-145 carries the post-translational modification N6-acetyllysine.

The protein belongs to the globin family. Heterotetramer of two alpha chains and two beta chains. As to expression, red blood cells.

Involved in oxygen transport from the lung to the various peripheral tissues. In Colobus polykomos (Western black-and-white colobus monkey), this protein is Hemoglobin subunit beta (HBB).